Reading from the N-terminus, the 338-residue chain is Inositol 2-dehydrogenase 3 (338 aa).

Belongs to the Gfo/Idh/MocA family. In terms of assembly, homotetramer.

It carries out the reaction myo-inositol + NAD(+) = scyllo-inosose + NADH + H(+). In terms of biological role, involved in the oxidation of myo-inositol (MI) to 2-keto-myo-inositol (2KMI or 2-inosose). The protein is Inositol 2-dehydrogenase 3 of Saccharopolyspora erythraea (strain ATCC 11635 / DSM 40517 / JCM 4748 / NBRC 13426 / NCIMB 8594 / NRRL 2338).